Consider the following 88-residue polypeptide: Small ribosomal subunit protein uS17 (88 aa).

Belongs to the universal ribosomal protein uS17 family. Part of the 30S ribosomal subunit.

One of the primary rRNA binding proteins, it binds specifically to the 5'-end of 16S ribosomal RNA. This Syntrophotalea carbinolica (strain DSM 2380 / NBRC 103641 / GraBd1) (Pelobacter carbinolicus) protein is Small ribosomal subunit protein uS17.